The primary structure comprises 896 residues: Alanine--tRNA ligase (896 aa).

Positions 580, 584, 683, and 687 each coordinate Zn(2+).

The protein belongs to the class-II aminoacyl-tRNA synthetase family. The cofactor is Zn(2+).

It localises to the cytoplasm. The catalysed reaction is tRNA(Ala) + L-alanine + ATP = L-alanyl-tRNA(Ala) + AMP + diphosphate. Catalyzes the attachment of alanine to tRNA(Ala) in a two-step reaction: alanine is first activated by ATP to form Ala-AMP and then transferred to the acceptor end of tRNA(Ala). Also edits incorrectly charged Ser-tRNA(Ala) and Gly-tRNA(Ala) via its editing domain. The chain is Alanine--tRNA ligase from Mycolicibacterium smegmatis (strain ATCC 700084 / mc(2)155) (Mycobacterium smegmatis).